Here is a 249-residue protein sequence, read N- to C-terminus: 5'-nucleotidase SurE (249 aa).

Asp-8, Asp-9, Ser-39, and Asn-91 together coordinate a divalent metal cation.

It belongs to the SurE nucleotidase family. A divalent metal cation is required as a cofactor.

The protein resides in the cytoplasm. The catalysed reaction is a ribonucleoside 5'-phosphate + H2O = a ribonucleoside + phosphate. Nucleotidase that shows phosphatase activity on nucleoside 5'-monophosphates. The chain is 5'-nucleotidase SurE from Pseudomonas entomophila (strain L48).